Consider the following 89-residue polypeptide: MSITAERKTALIKDYAKGNKDTGSPEVQIAILTERITNLTAHFKTHGKDNHSRRGLLKLVSQRRSLLDYLKRKEEARYRTLIERLGIRR.

The protein belongs to the universal ribosomal protein uS15 family. As to quaternary structure, part of the 30S ribosomal subunit. Forms a bridge to the 50S subunit in the 70S ribosome, contacting the 23S rRNA.

Functionally, one of the primary rRNA binding proteins, it binds directly to 16S rRNA where it helps nucleate assembly of the platform of the 30S subunit by binding and bridging several RNA helices of the 16S rRNA. In terms of biological role, forms an intersubunit bridge (bridge B4) with the 23S rRNA of the 50S subunit in the ribosome. This chain is Small ribosomal subunit protein uS15, found in Methylorubrum extorquens (strain CM4 / NCIMB 13688) (Methylobacterium extorquens).